We begin with the raw amino-acid sequence, 494 residues long: Flavin-containing monooxygenase ustF2 (494 aa).

The N-terminal stretch at 1–21 is a signal peptide; that stretch reads MANPQTTRVAVVGAGISGVLA. 13-18 is an FAD binding site; that stretch reads GAGISG. A disordered region spans residues 73–93; sequence EPSYPAMKPSKADPPATNEQE. 250-255 provides a ligand contact to NADP(+); it reads GGGVSS. Residue Asn459 is glycosylated (N-linked (GlcNAc...) asparagine).

This sequence belongs to the FMO family.

It functions in the pathway mycotoxin biosynthesis. Flavin-containing monooxygenase; part of the gene cluster that mediates the biosynthesis of the secondary metabolite ustiloxin B, an antimitotic tetrapeptide. First, ustA is processed by the subtilisin-like endoprotease Kex2 that is outside the ustiloxin B gene cluster, at the C-terminal side of Arg-Lys, after transfer to Golgi apparatus through the endoplasmic reticulum (ER). Cleavage by KEX2 generates 16 peptides YAIG-I to YAIG-XVI. To process the precursor peptide further, at least two peptidases are necessary to cleave the N-terminal and C-terminal sides of the Tyr-Ala-Ile-Gly core peptide which serves as backbone for the synthesis of ustiloxin B, through cyclization and modification of the tyrosine with a non-protein coding amino acid, norvaline. One of the two peptidases must be the serine peptidase ustP; and the other pepdidase is probably ustH. Macrocyclization of the core peptide derived from ustA requires the tyrosinase ustQ, as well as the homologous oxidases ustYa and ustYb, and leads to the production of the first cyclization product N-desmethylustiloxin F. For the formation of N-desmethylustiloxin F, three oxidation steps are required, hydroxylation at the benzylic position, hydroxylation at either the aromatic ring of Tyr or beta-position of Ile, and oxidative cyclization. UstQ may catalyze the oxidation of a phenol moiety, whereas the ustYa and ustYb are most likely responsible for the remaining two-step oxidations. N-desmethylustiloxin F is then methylated by ustM to yield ustiloxin F which in turn substrate of the cytochrome P450 monooxygenase ustC which catalyzes the formation of S-deoxyustiloxin H. The flavoprotein monooxygenases ustF1 and ustF2 then participate in the modification of the side chain of S-deoxyustiloxin H, leading to the synthesis of an oxime intermediate, via ustiloxin H. Finally, carboxylative dehydration performed by the cysteine desulfurase-like protein ustD yields ustiloxin B. In Aspergillus flavus (strain ATCC 200026 / FGSC A1120 / IAM 13836 / NRRL 3357 / JCM 12722 / SRRC 167), this protein is Flavin-containing monooxygenase ustF2.